Consider the following 318-residue polypeptide: Thymidylate synthase (318 aa).

DUMP contacts are provided by residues R25 and 180-181 (RR). C200 functions as the Nucleophile in the catalytic mechanism. Residues 220–223 (RSGD), N231, and 261–263 (HIY) each bind dUMP. (6R)-5,10-methylene-5,6,7,8-tetrahydrofolate is bound at residue D223. A317 is a (6R)-5,10-methylene-5,6,7,8-tetrahydrofolate binding site.

It belongs to the thymidylate synthase family. Bacterial-type ThyA subfamily. In terms of assembly, homodimer.

It is found in the cytoplasm. The catalysed reaction is dUMP + (6R)-5,10-methylene-5,6,7,8-tetrahydrofolate = 7,8-dihydrofolate + dTMP. It functions in the pathway pyrimidine metabolism; dTTP biosynthesis. Its function is as follows. Catalyzes the reductive methylation of 2'-deoxyuridine-5'-monophosphate (dUMP) to 2'-deoxythymidine-5'-monophosphate (dTMP) while utilizing 5,10-methylenetetrahydrofolate (mTHF) as the methyl donor and reductant in the reaction, yielding dihydrofolate (DHF) as a by-product. This enzymatic reaction provides an intracellular de novo source of dTMP, an essential precursor for DNA biosynthesis. This Bacillus cereus (strain ZK / E33L) protein is Thymidylate synthase.